A 180-amino-acid polypeptide reads, in one-letter code: p-cumate 2,3-dioxygenase system, small oxygenase component (180 aa).

It belongs to the bacterial ring-hydroxylating dioxygenase beta subunit family. In terms of assembly, the p-cumate 2,3-dioxygenase multicomponent enzyme system is composed of an electron transfer component and a dioxygenase component (iron sulfur protein (ISP)). The electron transfer component is composed of a ferredoxin reductase (CmtAa) and a ferredoxin (CmtAd), and the dioxygenase component is formed of a large alpha subunit (CmtAb) and a small beta subunit (CmtAc).

The protein operates within aromatic compound metabolism; p-cumate degradation; acetaldehyde and pyruvate from p-cumate. Component of the p-cumate 2,3-dioxygenase multicomponent enzyme system which catalyzes the incorporation of both atoms of molecular oxygen into p-cumate to form cis-2,3-dihydroxy-2,3-dihydro-p-cumate. The beta subunit seems to have a structural role in the holoenzyme. Also able to catalyze the cis-dihydroxylation of indole-2-carboxylate and indole-3-carboxylate. The sequence is that of p-cumate 2,3-dioxygenase system, small oxygenase component from Pseudomonas putida (Arthrobacter siderocapsulatus).